Here is a 200-residue protein sequence, read N- to C-terminus: Inner membrane-spanning protein YciB (200 aa).

5 helical membrane passes run 32 to 52, 56 to 76, 93 to 113, 126 to 146, and 153 to 173; these read FVAT…SYVV, VPLM…LTLV, LFAV…AILF, FLTI…EVIW, and FWVA…AMTQ.

Belongs to the YciB family.

Its subcellular location is the cell inner membrane. Plays a role in cell envelope biogenesis, maintenance of cell envelope integrity and membrane homeostasis. The protein is Inner membrane-spanning protein YciB of Afipia carboxidovorans (strain ATCC 49405 / DSM 1227 / KCTC 32145 / OM5) (Oligotropha carboxidovorans).